Reading from the N-terminus, the 156-residue chain is MNLNATLVAQMVVFFILWWVVAKFIWPPLVKALDERAKKIADGLAAADKGKAELELANKRVDQALTEARNEGAQRIADAEKRAQMTADEIKQNAQAEAARIIAQAKAEAEQQTVRARESLRDQVAVLAVKGAEQILKREVNAQVHADLLNQLKAEL.

The chain crosses the membrane as a helical span at residues 7–27 (LVAQMVVFFILWWVVAKFIWP).

Belongs to the ATPase B chain family. F-type ATPases have 2 components, F(1) - the catalytic core - and F(0) - the membrane proton channel. F(1) has five subunits: alpha(3), beta(3), gamma(1), delta(1), epsilon(1). F(0) has three main subunits: a(1), b(2) and c(10-14). The alpha and beta chains form an alternating ring which encloses part of the gamma chain. F(1) is attached to F(0) by a central stalk formed by the gamma and epsilon chains, while a peripheral stalk is formed by the delta and b chains.

It localises to the cell inner membrane. Its function is as follows. F(1)F(0) ATP synthase produces ATP from ADP in the presence of a proton or sodium gradient. F-type ATPases consist of two structural domains, F(1) containing the extramembraneous catalytic core and F(0) containing the membrane proton channel, linked together by a central stalk and a peripheral stalk. During catalysis, ATP synthesis in the catalytic domain of F(1) is coupled via a rotary mechanism of the central stalk subunits to proton translocation. In terms of biological role, component of the F(0) channel, it forms part of the peripheral stalk, linking F(1) to F(0). The polypeptide is ATP synthase subunit b (Ralstonia pickettii (strain 12J)).